Here is a 151-residue protein sequence, read N- to C-terminus: Large ribosomal subunit protein bL9 (151 aa).

This sequence belongs to the bacterial ribosomal protein bL9 family.

Its function is as follows. Binds to the 23S rRNA. The polypeptide is Large ribosomal subunit protein bL9 (Mycoplasmopsis agalactiae (strain NCTC 10123 / CIP 59.7 / PG2) (Mycoplasma agalactiae)).